The chain runs to 476 residues: Ubiquinone biosynthesis monooxygenase COQ6, mitochondrial (476 aa).

The N-terminal 42 residues, 1–42 (MAARIGPMAGLLCVRWWSTAQLAARGGPLVACRRWTSSSTDS), are a transit peptide targeting the mitochondrion.

This sequence belongs to the UbiH/COQ6 family. As to quaternary structure, component of a multi-subunit COQ enzyme complex, composed of at least COQ3, COQ4, COQ5, COQ6, COQ7 and COQ9. Interacts with COQ8B and COQ7. FAD serves as cofactor. In the kidney, expressed almost exclusively in glomerular podocytes. In the inner ear, expressed in the spiral ganglion, as well as in stria vascularis and spiral ligament cells.

The protein resides in the mitochondrion inner membrane. Its subcellular location is the golgi apparatus. The protein localises to the cell projection. It catalyses the reaction 4-hydroxy-3-(all-trans-decaprenyl)benzoate + 2 reduced [2Fe-2S]-[ferredoxin] + O2 + 2 H(+) = 3,4-dihydroxy-5-(all-trans-decaprenyl)benzoate + 2 oxidized [2Fe-2S]-[ferredoxin] + H2O. The catalysed reaction is 2-methoxy-6-(all-trans-decaprenyl)phenol + 2 reduced [2Fe-2S]-[ferredoxin] + O2 + 2 H(+) = 2-methoxy-6-(all-trans-decaprenyl)benzene-1,4-diol + 2 oxidized [2Fe-2S]-[ferredoxin] + H2O. Its pathway is cofactor biosynthesis; ubiquinone biosynthesis. Its function is as follows. FAD-dependent monooxygenase required for two non-consecutive steps during ubiquinone biosynthesis. Required for the C5-ring hydroxylation during ubiquinone biosynthesis by catalyzing the hydroxylation of 4-hydroxy-3-(all-trans-decaprenyl)benzoic acid to 3,4-dihydroxy-5-(all-trans-decaprenyl)benzoic acid. Also acts downstream of COQ4, for the C1-hydroxylation during ubiquinone biosynthesis by catalyzing the hydroxylation of 2-methoxy-6-(all-trans-decaprenyl)phenol to 2-methoxy-6-(all-trans-decaprenyl)benzene-1,4-diol. The electrons required for the hydroxylation reaction are funneled indirectly to COQ6 from NADPH via a ferredoxin/ferredoxin reductase system composed of FDX2 and FDXR. This chain is Ubiquinone biosynthesis monooxygenase COQ6, mitochondrial, found in Rattus norvegicus (Rat).